A 631-amino-acid chain; its full sequence is Chimallin (631 aa).

Over residues 1 to 29 the composition is skewed to low complexity; the sequence is MIRDTATNTTQTQAAPQQAPAQQFTQAPQ. The tract at residues 1 to 63 is disordered; sequence MIRDTATNTT…FTRSGNVQGG (63 aa). The span at 32–59 shows a compositional bias: polar residues; that stretch reads PMQSTQSQPTPSYAGTGGINSQFTRSGN. Homotetramerization regions lie at residues 590-611 and 622-631; these read QRFM…QVHS and QYQTGPSSFY.

The protein belongs to the Phikzvirus chimallin family. Homotetramer. The tetrameric protomers further assemble as a square grid.

The protein localises to the host cytoplasm. Its function is as follows. Self-assembles to form a proteinaceous shell that encloses the viral DNA and compartmentalizes proteins and DNA during viral infection. This micrometer-scale compartment contains narrow pores and is the site of viral replication, with the proteins involved in DNA replication localized inside. Provides a surface for docking of capsids during packaging. Probably protects the viral genome against host defenses. This chain is Chimallin, found in Pseudomonas chlororaphis (Pseudomonas chlororaphis phage 201phi2-1).